The primary structure comprises 207 residues: FMN-dependent NADH:quinone oxidoreductase 1 (207 aa).

FMN-binding positions include serine 9, 15–17 (SIS), and 139–142 (TRGG).

Belongs to the azoreductase type 1 family. Homodimer. FMN serves as cofactor.

It catalyses the reaction 2 a quinone + NADH + H(+) = 2 a 1,4-benzosemiquinone + NAD(+). It carries out the reaction N,N-dimethyl-1,4-phenylenediamine + anthranilate + 2 NAD(+) = 2-(4-dimethylaminophenyl)diazenylbenzoate + 2 NADH + 2 H(+). Quinone reductase that provides resistance to thiol-specific stress caused by electrophilic quinones. Its function is as follows. Also exhibits azoreductase activity. Catalyzes the reductive cleavage of the azo bond in aromatic azo compounds to the corresponding amines. This Trichormus variabilis (strain ATCC 29413 / PCC 7937) (Anabaena variabilis) protein is FMN-dependent NADH:quinone oxidoreductase 1.